The sequence spans 87 residues: Glutaredoxin (87 aa).

The Glutaredoxin domain maps to 1 to 87 (MFVVIFGRPG…LMKEQFGIVA (87 aa)). A disulfide bridge connects residues Cys11 and Cys14.

The protein belongs to the glutaredoxin family. As to quaternary structure, monomer.

Its subcellular location is the cytoplasm. In terms of biological role, has a glutathione-disulfide oxidoreductase activity in the presence of NADPH and glutathione reductase. Reduces low molecular weight disulfides and proteins. This chain is Glutaredoxin (grxA), found in Haemophilus influenzae (strain ATCC 51907 / DSM 11121 / KW20 / Rd).